The sequence spans 585 residues: Aspartate--tRNA ligase (585 aa).

Residue Glu173 participates in L-aspartate binding. An aspartate region spans residues 197–200 (QTLK). Arg219 serves as a coordination point for L-aspartate. Residues 219 to 221 (RDE) and Gln228 each bind ATP. His446 lines the L-aspartate pocket. Glu480 contributes to the ATP binding site. Arg487 contacts L-aspartate. An ATP-binding site is contributed by 532–535 (GLDR).

The protein belongs to the class-II aminoacyl-tRNA synthetase family. Type 1 subfamily. As to quaternary structure, homodimer.

The protein resides in the cytoplasm. The enzyme catalyses tRNA(Asp) + L-aspartate + ATP = L-aspartyl-tRNA(Asp) + AMP + diphosphate. Its function is as follows. Catalyzes the attachment of L-aspartate to tRNA(Asp) in a two-step reaction: L-aspartate is first activated by ATP to form Asp-AMP and then transferred to the acceptor end of tRNA(Asp). This chain is Aspartate--tRNA ligase, found in Bacteroides fragilis (strain YCH46).